Consider the following 611-residue polypeptide: tRNA uridine 5-carboxymethylaminomethyl modification enzyme MnmG (611 aa).

14-19 (GAGHAG) contributes to the FAD binding site. 274–288 (GPRYCPSIEDKIVKF) is a binding site for NAD(+).

Belongs to the MnmG family. In terms of assembly, homodimer. Heterotetramer of two MnmE and two MnmG subunits. Requires FAD as cofactor.

The protein resides in the cytoplasm. Functionally, NAD-binding protein involved in the addition of a carboxymethylaminomethyl (cmnm) group at the wobble position (U34) of certain tRNAs, forming tRNA-cmnm(5)s(2)U34. This chain is tRNA uridine 5-carboxymethylaminomethyl modification enzyme MnmG, found in Chlamydia felis (strain Fe/C-56) (Chlamydophila felis).